The sequence spans 330 residues: 5'-AMP-activated protein kinase subunit gamma-1 (330 aa).

Residues 1 to 12 show a composition bias toward low complexity; sequence MESVAAESAPAP. The disordered stretch occupies residues 1–25; sequence MESVAAESAPAPENEHSQETPESNS. CBS domains are found at residues 42–102, 124–186, and 197–259; these read PTSS…KSAL, SFKP…PKPE, and IGTY…NLDV. Residues arginine 69, 84 to 89, valine 129, 150 to 151, and lysine 169 each bind ADP; these read MLTITD and HR. Residues arginine 69, 84 to 89, valine 129, histidine 150, 150 to 151, lysine 169, threonine 199, alanine 204, 225 to 226, and 241 to 244 contribute to the AMP site; these read MLTITD, HR, SA, and SKFD. ATP contacts are provided by residues arginine 69, 84–89, valine 129, 150–151, arginine 151, and lysine 169; these read MLTITD and HR. Residues 137-158 carry the AMPK pseudosubstrate motif; it reads LFDAVSSLIRNKIHRLPVIDPE. An ADP-binding site is contributed by 241 to 244; that stretch reads SKFD. 241-244 contacts ATP; that stretch reads SKFD. Serine 260 is subject to Phosphoserine; by ULK1. Threonine 262 is subject to Phosphothreonine; by ULK1. Position 268 (arginine 268) interacts with ADP. Arginine 268 lines the AMP pocket. Arginine 268 is a binding site for ATP. Serine 269 is modified (phosphoserine; by ULK1). The region spanning 271 to 328 is the CBS 4 domain; sequence YFEGVLKCYLHETLEAIINRLVEAEVHRLVVVDEHDVVKGIVSLSDILQALVLTGGEK. ADP-binding positions include leucine 276 and 297 to 298; that span reads HR. Residues leucine 276, histidine 297, 297–298, and 313–316 each bind AMP; these read HR and SLSD. ATP contacts are provided by residues leucine 276 and 297–298; that span reads HR.

It belongs to the 5'-AMP-activated protein kinase gamma subunit family. AMPK is a heterotrimer of an alpha catalytic subunit (PRKAA1 or PRKAA2), a beta (PRKAB1 or PRKAB2) and a gamma non-catalytic subunits (PRKAG1, PRKAG2 or PRKAG3). Interacts with FNIP1 and FNIP2. Phosphorylated by ULK1 and ULK2; leading to negatively regulate AMPK activity and suggesting the existence of a regulatory feedback loop between ULK1, ULK2 and AMPK. There is some ambiguity for a phosphosite: Ser-260/Thr-262. Post-translationally, glycosylated; O-GlcNAcylated by OGT, promoting the AMP-activated protein kinase (AMPK) activity. Highly expressed in heart and brain, also found in kidney, white adipose tissue, lung and spleen.

Functionally, AMP/ATP-binding subunit of AMP-activated protein kinase (AMPK), an energy sensor protein kinase that plays a key role in regulating cellular energy metabolism. In response to reduction of intracellular ATP levels, AMPK activates energy-producing pathways and inhibits energy-consuming processes: inhibits protein, carbohydrate and lipid biosynthesis, as well as cell growth and proliferation. AMPK acts via direct phosphorylation of metabolic enzymes, and by longer-term effects via phosphorylation of transcription regulators. Also acts as a regulator of cellular polarity by remodeling the actin cytoskeleton; probably by indirectly activating myosin. Gamma non-catalytic subunit mediates binding to AMP, ADP and ATP, leading to activate or inhibit AMPK: AMP-binding results in allosteric activation of alpha catalytic subunit (PRKAA1 or PRKAA2) both by inducing phosphorylation and preventing dephosphorylation of catalytic subunits. ADP also stimulates phosphorylation, without stimulating already phosphorylated catalytic subunit. ATP promotes dephosphorylation of catalytic subunit, rendering the AMPK enzyme inactive. The protein is 5'-AMP-activated protein kinase subunit gamma-1 (Prkag1) of Rattus norvegicus (Rat).